The sequence spans 580 residues: Probable inactive 1-aminocyclopropane-1-carboxylate synthase-like protein 2 (580 aa).

A disordered region spans residues 1-43 (MSENRNEGSSQAAKANSDTQTPSHFKVTHPRLRDQLKKKSSKK). Residues 7-23 (EGSSQAAKANSDTQTPS) show a composition bias toward polar residues. Lysine 417 carries the post-translational modification N6-(pyridoxal phosphate)lysine.

This sequence belongs to the class-I pyridoxal-phosphate-dependent aminotransferase family.

The sequence is that of Probable inactive 1-aminocyclopropane-1-carboxylate synthase-like protein 2 (Accsl) from Mus musculus (Mouse).